Consider the following 250-residue polypeptide: 2,3-bisphosphoglycerate-dependent phosphoglycerate mutase (250 aa).

Substrate is bound by residues 8–15 (RHGQSAWN), 21–22 (TG), arginine 60, 87–90 (ERHY), lysine 98, 114–115 (RR), and 183–184 (GN). Catalysis depends on histidine 9, which acts as the Tele-phosphohistidine intermediate. The Proton donor/acceptor role is filled by glutamate 87.

Belongs to the phosphoglycerate mutase family. BPG-dependent PGAM subfamily. In terms of assembly, homodimer.

It catalyses the reaction (2R)-2-phosphoglycerate = (2R)-3-phosphoglycerate. Its pathway is carbohydrate degradation; glycolysis; pyruvate from D-glyceraldehyde 3-phosphate: step 3/5. Functionally, catalyzes the interconversion of 2-phosphoglycerate and 3-phosphoglycerate. The chain is 2,3-bisphosphoglycerate-dependent phosphoglycerate mutase from Nitratidesulfovibrio vulgaris (strain DP4) (Desulfovibrio vulgaris).